The sequence spans 186 residues: UPF0200 protein Mbar_A0975 (186 aa).

8–15 (GMPASGKS) provides a ligand contact to ATP.

Belongs to the UPF0200 family.

The sequence is that of UPF0200 protein Mbar_A0975 from Methanosarcina barkeri (strain Fusaro / DSM 804).